Reading from the N-terminus, the 370-residue chain is Natural killer cell receptor 2B4 (370 aa).

The signal sequence occupies residues 1–21; sequence MLGQVVTLILLLLLKVYQGKG. Ig-like domains follow at residues 22–127 and 131–215; these read CQGS…FVFE and PDKV…LNLT. Residues 22 to 229 are Extracellular-facing; the sequence is CQGSADHVVS…NAHQEFRFWP (208 aa). Asn71, Asn77, Asn89, Asn164, Asn181, Asn192, Asn200, and Asn213 each carry an N-linked (GlcNAc...) asparagine glycan. Cysteines 157 and 199 form a disulfide. A helical transmembrane segment spans residues 230-250; that stretch reads FLVIIVILSALFLGTLACFCV. Residues 251-370 are Cytoplasmic-facing; that stretch reads WRRKRKEKQS…KELENFDVYS (120 aa). 4 consecutive short sequence motifs (ITSM) follow at residues 269–274, 295–300, 315–320, and 340–345; these read TIYEDV, TIYSMI, TLYSLI, and TIYEVI. At Tyr271 the chain carries Phosphotyrosine. Tyr297 bears the Phosphotyrosine; by FYN mark. Tyr317 carries the post-translational modification Phosphotyrosine. The tract at residues 324–370 is disordered; the sequence is RKSGSRKRNHSPSFNSTIYEVIGKSQPKAQNPARLSRKELENFDVYS. Tyr342 carries the post-translational modification Phosphotyrosine; by FYN.

As to quaternary structure, interacts with CD48. Interacts (via phosphorylated ITSM 1-4) with SH2D1A (via SH2 domain); SH2D1A probably mediates association with FYN. Interacts (via phosphorylated ITSM 3) with PTPN11/SHP-2, INPP5D/SHIP1, PTPN6/SHP-1 and CSK; binding of SH2D1A/SAP prevents association with PTPN11, PTPN6 and CSK; conflictingly a similar association has been described for phosphorylated ITSM 1 also including GRB2 and PLCG1. Interacts weakly (via phosphorylated ITSM 2) with PTPN11/SHP-2 and CSK. Interacts with SH2D1B. Interacts with PIK3R1; PI3K recruits SH2D1A. Interacts with MHC class I proteins; the interaction is proposed to prevent self-killing of NK cells. Post-translationally, N-linked glycosylation is essential for the binding to its ligand CD48. Also O-glycosylated, in contrast, O-linked sialylation has a negative impact on ligand binding. In terms of processing, phosphorylated by FYN and CSK on tyrosine residues following activation. Coligation with inhibitory receptors such as KIR2DL1 inhibits phosphorylation upon contact of NK cells with sensitive target cells. Expressed in spleen, PBL, followed by lung, liver, testis and small intestine. Expressed in all natural killer (NK) cells, monocytes and basophils, TCR-gamma/delta+ T-cells, monocytes, basophils, and on a subset of CD8(+) T-cells.

It localises to the membrane. Its subcellular location is the cell membrane. The protein localises to the membrane raft. In terms of biological role, heterophilic receptor of the signaling lymphocytic activation molecule (SLAM) family; its ligand is CD48. SLAM receptors triggered by homo- or heterotypic cell-cell interactions are modulating the activation and differentiation of a wide variety of immune cells and thus are involved in the regulation and interconnection of both innate and adaptive immune response. Activities are controlled by presence or absence of small cytoplasmic adapter proteins, SH2D1A/SAP and/or SH2D1B/EAT-2. Acts as activating natural killer (NK) cell receptor. Activating function implicates association with SH2D1A and FYN. Downstreaming signaling involves predominantly VAV1, and, to a lesser degree, INPP5D/SHIP1 and CBL. Signal attenuation in the absence of SH2D1A is proposed to be dependent on INPP5D and to a lesser extent PTPN6/SHP-1 and PTPN11/SHP-2. Stimulates NK cell cytotoxicity, production of IFN-gamma and granule exocytosis. Optimal expansion and activation of NK cells seems to be dependent on the engagement of CD244 with CD48 expressed on neighboring NK cells. Acts as costimulator in NK activation by enhancing signals by other NK receptors such as NCR3 and NCR1. At early stages of NK cell differentiation may function as an inhibitory receptor possibly ensuring the self-tolerance of developing NK cells. Involved in the regulation of CD8(+) T-cell proliferation; expression on activated T-cells and binding to CD48 provides costimulatory-like function for neighboring T-cells. Inhibits inflammatory responses in dendritic cells (DCs). The chain is Natural killer cell receptor 2B4 (CD244) from Homo sapiens (Human).